Consider the following 874-residue polypeptide: Alanine--tRNA ligase (874 aa).

The Zn(2+) site is built by H563, H567, C665, and H669.

The protein belongs to the class-II aminoacyl-tRNA synthetase family. Zn(2+) is required as a cofactor.

It localises to the cytoplasm. The enzyme catalyses tRNA(Ala) + L-alanine + ATP = L-alanyl-tRNA(Ala) + AMP + diphosphate. Functionally, catalyzes the attachment of alanine to tRNA(Ala) in a two-step reaction: alanine is first activated by ATP to form Ala-AMP and then transferred to the acceptor end of tRNA(Ala). Also edits incorrectly charged Ser-tRNA(Ala) and Gly-tRNA(Ala) via its editing domain. The chain is Alanine--tRNA ligase from Actinobacillus pleuropneumoniae serotype 3 (strain JL03).